The primary structure comprises 116 residues: Putative pterin-4-alpha-carbinolamine dehydratase (116 aa).

This sequence belongs to the pterin-4-alpha-carbinolamine dehydratase family.

It carries out the reaction (4aS,6R)-4a-hydroxy-L-erythro-5,6,7,8-tetrahydrobiopterin = (6R)-L-erythro-6,7-dihydrobiopterin + H2O. The sequence is that of Putative pterin-4-alpha-carbinolamine dehydratase from Stenotrophomonas maltophilia (strain R551-3).